We begin with the raw amino-acid sequence, 185 residues long: Ribosome-recycling factor (185 aa).

It belongs to the RRF family.

Its subcellular location is the cytoplasm. Its function is as follows. Responsible for the release of ribosomes from messenger RNA at the termination of protein biosynthesis. May increase the efficiency of translation by recycling ribosomes from one round of translation to another. This is Ribosome-recycling factor from Shewanella sp. (strain ANA-3).